Here is a 393-residue protein sequence, read N- to C-terminus: Zinc-regulated GTPase metalloprotein activator 1 (393 aa).

Positions 16–23 (EDCPELVP) match the psi-PxLVp motif motif. 47–54 (GYLGAGKT) lines the GTP pocket. Positions 105, 107, and 108 each coordinate Zn(2+). Positions 105-108 (CLCC) match the CXCC motif motif. Residues 108-112 (CSVKD) and 201-204 (NKTD) each bind GTP. Positions 271–374 (IVTVTFEVPG…VLQQLFLTAV (104 aa)) constitute a CobW C-terminal domain.

Belongs to the SIMIBI class G3E GTPase family. ZNG1 subfamily. In terms of tissue distribution, present at high level in the nuclei of the ureteric bud cells in the developing kidneys.

The protein localises to the nucleus. It catalyses the reaction GTP + H2O = GDP + phosphate + H(+). Zinc chaperone that directly transfers zinc cofactor to target metalloproteins, thereby activating them. Catalyzes zinc insertion into the active site of methionine aminopeptidase METAP1, which function to cleave the initiator methionine from polypeptides during or after protein translation. Mechanistically, the N-terminal psi-PxLVp motif binds to the C6H2-type zinc finger of inactive form of METAP1. After formation of the docked complex, zinc is transferred from the CXCC motif in the GTPase domain of ZNG1 to the zinc binding site in the peptidase domain of METAP1 in a process requiring GTP hydrolysis. GTP/GDP exchange is required for release of active METAP1. This is Zinc-regulated GTPase metalloprotein activator 1 (Zng1) from Mus musculus (Mouse).